We begin with the raw amino-acid sequence, 298 residues long: 33 kDa chaperonin (298 aa).

2 disulfides stabilise this stretch: cysteine 239/cysteine 241 and cysteine 272/cysteine 275.

It belongs to the HSP33 family. Post-translationally, under oxidizing conditions two disulfide bonds are formed involving the reactive cysteines. Under reducing conditions zinc is bound to the reactive cysteines and the protein is inactive.

It localises to the cytoplasm. Redox regulated molecular chaperone. Protects both thermally unfolding and oxidatively damaged proteins from irreversible aggregation. Plays an important role in the bacterial defense system toward oxidative stress. This Picosynechococcus sp. (strain ATCC 27264 / PCC 7002 / PR-6) (Agmenellum quadruplicatum) protein is 33 kDa chaperonin.